We begin with the raw amino-acid sequence, 472 residues long: MSVYDAAFLNTELSKPTSIFGLRLWVVIGILLGSLIVIALFLLSLCLTSRRKNRKPRADFASAAIATPPISKEIKEIVPAQNQSVPAEIQVDIGKIEHRVVFSDRVSSGESRGTASASETASYSGSGNCGPEVSHLGWGRWYTLRELEAATNGLCEENVIGEGGYGIVYRGILTDGTKVAVKNLLNNRGQAEKEFKVEVEVIGRVRHKNLVRLLGYCVEGAYRMLVYDFVDNGNLEQWIHGDVGDVSPLTWDIRMNIILGMAKGLAYLHEGLEPKVVHRDIKSSNILLDRQWNAKVSDFGLAKLLGSESSYVTTRVMGTFGYVAPEYACTGMLNEKSDIYSFGILIMEIITGRNPVDYSRPQGETNLVDWLKSMVGNRRSEEVVDPKIPEPPSSKALKRVLLVALRCVDPDANKRPKMGHIIHMLEAEDLLYRDERRTTRDHGSRERQETAVVAAGSESGESGSRHHQQKQR.

A helical transmembrane segment spans residues Leu-24–Ser-44. Phosphothreonine occurs at positions 67 and 143. The Protein kinase domain occupies Leu-154–Leu-431. ATP contacts are provided by residues Ile-160–Val-168 and Lys-182. Tyr-227 carries the phosphotyrosine modification. Residue Asp-280 is the Proton acceptor of the active site. Ser-284 is subject to Phosphoserine. A phosphothreonine mark is found at Thr-314 and Thr-319. Position 327 is a phosphotyrosine (Tyr-327). Residues Arg-437 to Glu-449 are compositionally biased toward basic and acidic residues. The interval Arg-437–Arg-472 is disordered. The segment covering Ala-451 to Ser-462 has biased composition (low complexity).

Belongs to the protein kinase superfamily. Ser/Thr protein kinase family.

It localises to the membrane. The catalysed reaction is L-seryl-[protein] + ATP = O-phospho-L-seryl-[protein] + ADP + H(+). The enzyme catalyses L-threonyl-[protein] + ATP = O-phospho-L-threonyl-[protein] + ADP + H(+). The sequence is that of Probable serine/threonine-protein kinase At1g01540 from Arabidopsis thaliana (Mouse-ear cress).